A 279-amino-acid chain; its full sequence is Borealin (279 aa).

Positions Lys-135–Arg-152 are enriched in basic residues. The disordered stretch occupies residues Lys-135–Glu-180. The span at Ala-153–Lys-163 shows a compositional bias: polar residues.

This sequence belongs to the borealin family. Component of the CPC at least composed of survivin/birc5, incenp, cdca8/borealin and/or cdca9/dasra-A, and aurkb/aurora-B. Interacts with incenp (via N-terminus).

The protein resides in the nucleus. It is found in the chromosome. The protein localises to the centromere. It localises to the cytoplasm. Its subcellular location is the cytoskeleton. The protein resides in the spindle. Its function is as follows. Component of the chromosomal passenger complex (CPC), a complex that acts as a key regulator of mitosis. The CPC complex has essential functions at the centromere in ensuring correct chromosome alignment and segregation and is required for chromatin-induced microtubule stabilization and spindle assembly. Contributes to CPC function by facilitating loading of the CPC onto chromosomes. This chain is Borealin (cdca8), found in Xenopus tropicalis (Western clawed frog).